Here is a 191-residue protein sequence, read N- to C-terminus: dTTP/UTP pyrophosphatase (191 aa).

The Proton acceptor role is filled by Asp-71.

It belongs to the Maf family. YhdE subfamily. The cofactor is a divalent metal cation.

Its subcellular location is the cytoplasm. The enzyme catalyses dTTP + H2O = dTMP + diphosphate + H(+). It carries out the reaction UTP + H2O = UMP + diphosphate + H(+). Its function is as follows. Nucleoside triphosphate pyrophosphatase that hydrolyzes dTTP and UTP. May have a dual role in cell division arrest and in preventing the incorporation of modified nucleotides into cellular nucleic acids. This is dTTP/UTP pyrophosphatase from Hyphomonas neptunium (strain ATCC 15444).